The following is a 480-amino-acid chain: Glycogen synthase (480 aa).

Position 15 (K15) interacts with ADP-alpha-D-glucose.

The protein belongs to the glycosyltransferase 1 family. Bacterial/plant glycogen synthase subfamily.

The catalysed reaction is [(1-&gt;4)-alpha-D-glucosyl](n) + ADP-alpha-D-glucose = [(1-&gt;4)-alpha-D-glucosyl](n+1) + ADP + H(+). Its pathway is glycan biosynthesis; glycogen biosynthesis. In terms of biological role, synthesizes alpha-1,4-glucan chains using ADP-glucose. The protein is Glycogen synthase of Rhizobium johnstonii (strain DSM 114642 / LMG 32736 / 3841) (Rhizobium leguminosarum bv. viciae).